We begin with the raw amino-acid sequence, 367 residues long: GTP cyclohydrolase FolE2 (367 aa).

The protein belongs to the GTP cyclohydrolase IV family.

It catalyses the reaction GTP + H2O = 7,8-dihydroneopterin 3'-triphosphate + formate + H(+). Its pathway is cofactor biosynthesis; 7,8-dihydroneopterin triphosphate biosynthesis; 7,8-dihydroneopterin triphosphate from GTP: step 1/1. Its function is as follows. Converts GTP to 7,8-dihydroneopterin triphosphate. This chain is GTP cyclohydrolase FolE2, found in Ruegeria pomeroyi (strain ATCC 700808 / DSM 15171 / DSS-3) (Silicibacter pomeroyi).